The following is a 560-amino-acid chain: Hypermethylated in cancer 2 protein (560 aa).

The BTB domain maps to 24 to 87 (CDVIIVVENA…IYTGKLLSSD (64 aa)). Disordered regions lie at residues 122–163 (RSLL…KTKR) and 183–367 (HCTT…GGRN). Composition is skewed to polar residues over residues 126–153 (NKPTTPTNGRTSRNQRLSSTPVTPNQMS) and 183–203 (HCTTSNSLSPSTSKNGSNGSC). The span at 224–242 (EEVSPSSIPQESPQSASES) shows a compositional bias: low complexity. The span at 243–259 (TANSASFDENPNTQNLT) shows a compositional bias: polar residues. Basic and acidic residues predominate over residues 296–308 (PKSEGKKGEDMER). Residues 348–362 (ENGQEQSEESGQSEN) are compositionally biased toward low complexity. 5 consecutive C2H2-type zinc fingers follow at residues 387-409 (YVCIPCGKGFPSSEELNAHVETH), 450-472 (FSCSVCNKSYKDPATLRQHEKTH), 478-500 (FPCNICGKMFTQRGTMTRHMRSH), 506-528 (FACEECGMRFTRQYRLTEHMRVH), and 534-556 (YECQLCGGKFTQQRNLISHLRMH).

It belongs to the krueppel C2H2-type zinc-finger protein family. Hic subfamily.

Its subcellular location is the nucleus. In terms of biological role, transcriptional repressor. The polypeptide is Hypermethylated in cancer 2 protein (hic2) (Danio rerio (Zebrafish)).